The chain runs to 103 residues: N(4)-acetylcytidine amidohydrolase (103 aa).

Residues 6–94 (ITFFQRFQND…IAEIYPNQTQ (89 aa)) enclose the ASCH domain. The Proton acceptor role is filled by lysine 21. Catalysis depends on threonine 24, which acts as the Nucleophile. Glutamate 74 serves as the catalytic Proton donor.

Belongs to the N(4)-acetylcytidine amidohydrolase family.

The catalysed reaction is N(4)-acetylcytidine + H2O = cytidine + acetate + H(+). The enzyme catalyses N(4)-acetyl-2'-deoxycytidine + H2O = 2'-deoxycytidine + acetate + H(+). It catalyses the reaction N(4)-acetylcytosine + H2O = cytosine + acetate + H(+). In terms of biological role, catalyzes the hydrolysis of N(4)-acetylcytidine (ac4C). The sequence is that of N(4)-acetylcytidine amidohydrolase (yqfB) from Salmonella heidelberg (strain SL476).